We begin with the raw amino-acid sequence, 276 residues long: Short-chain dehydrogenase anuF (276 aa).

The NADP(+) site is built by Ile-18, Asp-68, Lys-130, Tyr-176, Lys-180, Val-209, and Thr-211. The active-site Proton acceptor is Tyr-176. Tyr-176 acts as the Proton donor in catalysis. Lys-180 functions as the Lowers pKa of active site Tyr in the catalytic mechanism.

It belongs to the short-chain dehydrogenases/reductases (SDR) family.

The enzyme catalyses (2R,9S)-annullatin H + A = (2R)-annullatin F + AH2. In terms of biological role, cytochrome P450 monooxygenase; part of the gene cluster that mediates the biosynthesis of annullatin D, an alkylated aromatic polyketide with a fused dihydrobenzofuran lactone ring system that exhibits potent agonistic activities toward the cannabinoid receptors. Within the pathway, anuF is involved in the formation of (2R)-annullatin F from the diastereomer of (2S,9S)-annullatin H (compound 12). The annullatin backbone 2-hydroxymethyl-3-pentylphenol is assembled from one acetyl-CoA starter unit and 5 malonyl-CoA elongation units by cooperation of the highly reducing polyketide synthase anuA, the short-chain dehydrogenase anuB and the oxidoreductase anuC, before being hydroxylated at the C-5 alkyl chain by the cytochrome P450 monooxygenase anuE to form (8S)-annullatin E. The prenyltransferase anuH subsequently installs one isoprenyl group at the benzene ring to form (8S)-annullatin J. Enzymatic or nonenzymatic dihydro-benzofuran ring formation between the prenyl and the phenolic hydroxyl groups in (8S)-annullatin J results in two diastereomers (2S,9S)-annullatin H and compound 12. The intermediate (2S,9S)-annullatin H is then converted to (2S,9S)-annullatin D by the FAD-linked oxidoreductase anuG-catalyzed five-member lactone ring formation. The isomer 12 acts as a substrate for the short-chain dehydrogenase anuF and is oxidized to (2R)-annullatin F, which is subsequently acetylated by an acetyltransferase leading to (2R)-annullatin G formation. The remaining enzymes identified within the cluster, anuD, anuI and anuJ, seem not to be involved in annullatin biosynthesis. The sequence is that of Short-chain dehydrogenase anuF from Penicillium roqueforti (strain FM164).